A 492-amino-acid chain; its full sequence is Ketol-acid reductoisomerase (NADP(+)) (492 aa).

The 195-residue stretch at Leu14–Ser208 folds into the KARI N-terminal Rossmann domain. Residues Cys45–Gln48, Arg68, Arg76, Ser78, and Asp108–Gln110 each bind NADP(+). His132 is an active-site residue. Residue Gly158 participates in NADP(+) binding. KARI C-terminal knotted domains lie at Ser209 to Gln344 and Phe345 to Met485. Asp217, Glu221, Glu389, and Glu393 together coordinate Mg(2+). Substrate is bound at residue Ser414.

This sequence belongs to the ketol-acid reductoisomerase family. It depends on Mg(2+) as a cofactor.

It carries out the reaction (2R)-2,3-dihydroxy-3-methylbutanoate + NADP(+) = (2S)-2-acetolactate + NADPH + H(+). The enzyme catalyses (2R,3R)-2,3-dihydroxy-3-methylpentanoate + NADP(+) = (S)-2-ethyl-2-hydroxy-3-oxobutanoate + NADPH + H(+). It participates in amino-acid biosynthesis; L-isoleucine biosynthesis; L-isoleucine from 2-oxobutanoate: step 2/4. Its pathway is amino-acid biosynthesis; L-valine biosynthesis; L-valine from pyruvate: step 2/4. Functionally, involved in the biosynthesis of branched-chain amino acids (BCAA). Catalyzes an alkyl-migration followed by a ketol-acid reduction of (S)-2-acetolactate (S2AL) to yield (R)-2,3-dihydroxy-isovalerate. In the isomerase reaction, S2AL is rearranged via a Mg-dependent methyl migration to produce 3-hydroxy-3-methyl-2-ketobutyrate (HMKB). In the reductase reaction, this 2-ketoacid undergoes a metal-dependent reduction by NADPH to yield (R)-2,3-dihydroxy-isovalerate. This chain is Ketol-acid reductoisomerase (NADP(+)), found in Pectobacterium carotovorum subsp. carotovorum (strain PC1).